Here is an 802-residue protein sequence, read N- to C-terminus: Oligophrenin-1 (802 aa).

Residues 265-368 (QPTIEGYLYT…WMEAMDGKEP (104 aa)) enclose the PH domain. One can recognise a Rho-GAP domain in the interval 380 to 564 (MELNEVGFKF…ILIEHFGKIY (185 aa)). 4 disordered regions span residues 569 to 588 (EESA…RHKP), 607 to 666 (LDES…EPCP), 680 to 770 (GGTK…NAGE), and 783 to 802 (FETA…GDES). The span at 616-627 (HQTPNGTITSSI) shows a compositional bias: polar residues. Positions 716 to 732 (HHKEGDADSFSKVRPPG) are enriched in basic and acidic residues.

As to quaternary structure, interacts with HOMER1. Interacts with AMPA receptor complexes. Interacts with SH3GL2 (endophilin-A1). Interacts (via C-terminus) with NR1D1. As to expression, expressed in brain.

It is found in the postsynapse. It localises to the presynapse. Its subcellular location is the cell projection. The protein localises to the axon. The protein resides in the dendritic spine. It is found in the dendrite. It localises to the cytoplasm. Functionally, stimulates GTP hydrolysis of members of the Rho family. Its action on RHOA activity and signaling is implicated in growth and stabilization of dendritic spines, and therefore in synaptic function. Critical for the stabilization of AMPA receptors at postsynaptic sites. Critical for the regulation of synaptic vesicle endocytosis at presynaptic terminals. Required for the localization of NR1D1 to dendrites, can suppress its repressor activity and protect it from proteasomal degradation. In Homo sapiens (Human), this protein is Oligophrenin-1 (OPHN1).